Reading from the N-terminus, the 628-residue chain is Kinesin-like protein tea2 (628 aa).

An interaction with mal3 region spans residues 2–122 (SSSSSKPVNT…TTSQQTNSKG (121 aa)). S82 carries the phosphoserine modification. Residues 132 to 460 (GIITSIRIRP…LKFASRAQNL (329 aa)) form the Kinesin motor domain. Residue 218-225 (GMTGTGKT) participates in ATP binding. Residues 530–557 (LRMEELLSDHNFEIADLRDELQDKEQII) adopt a coiled-coil conformation. Residues 588-628 (VTRGSRSSSDQFSNETKTEILPDDQQQSKKDSVTQETQLLS) are disordered. Residues 589–602 (TRGSRSSSDQFSNE) are compositionally biased toward polar residues. A compositionally biased stretch (basic and acidic residues) spans 603 to 620 (TKTEILPDDQQQSKKDSV).

This sequence belongs to the TRAFAC class myosin-kinesin ATPase superfamily. Kinesin family. In terms of assembly, interacts with mal3 and tip1.

Its subcellular location is the cytoplasm. The protein resides in the cytoskeleton. Promotes microtubule growth, possibly through interactions with the microtubule end, and is important for establishing and maintaining polarized growth along the long axis of the cell. Acts as a kinesin motor protein that moves along microtubules and is required for proper localization of tea1 and tip1 to the cell tips and microtubules, respectively. ATPase activity stimulated via interaction with mal3. The polypeptide is Kinesin-like protein tea2 (Schizosaccharomyces pombe (strain 972 / ATCC 24843) (Fission yeast)).